The chain runs to 604 residues: UvrABC system protein C (604 aa).

The region spanning 17–95 (SQPGVYRMLN…IKSLAPRYNI (79 aa)) is the GIY-YIG domain. A UVR domain is found at 204–239 (DEVLKTIEQKMFEASDRQAYEQAVLFRDQMQALRMI).

It belongs to the UvrC family. In terms of assembly, interacts with UvrB in an incision complex.

The protein resides in the cytoplasm. The UvrABC repair system catalyzes the recognition and processing of DNA lesions. UvrC both incises the 5' and 3' sides of the lesion. The N-terminal half is responsible for the 3' incision and the C-terminal half is responsible for the 5' incision. This chain is UvrABC system protein C, found in Nitrosomonas eutropha (strain DSM 101675 / C91 / Nm57).